The primary structure comprises 372 residues: G patch domain and ankyrin repeat-containing protein 1 (372 aa).

The disordered stretch occupies residues 74–110 (DSSSSKPQRAEPMRERKKKRRRVTREPAAAGVPRQGR). ANK repeat units follow at residues 124-155 (LAAQ…ARDA) and 156-186 (FWWT…WVGV). 2 disordered regions span residues 211-233 (RESH…SSQF) and 251-271 (AHLL…GVPT). Over residues 220-233 (PENQNRSTPSSSQF) the composition is skewed to polar residues. The G-patch domain maps to 271-317 (TSSPGFRLLLRGGWEPGMGLGPRGEGRANPIPTILKRDQEGLGYRSP). Lysine 306 participates in a covalent cross-link: Glycyl lysine isopeptide (Lys-Gly) (interchain with G-Cter in SUMO2). Basic and acidic residues-rich tracts occupy residues 330-340 (TRAVSGRERVP) and 348-357 (RENRRQEEKG). The segment at 330–357 (TRAVSGRERVPRVATLSQRENRRQEEKG) is disordered.

The chain is G patch domain and ankyrin repeat-containing protein 1 (Gpank1) from Mus musculus (Mouse).